We begin with the raw amino-acid sequence, 399 residues long: Imidazolonepropionase (399 aa).

Over residues 1–13 (MSETLYTGISQLA) the composition is skewed to polar residues. The disordered stretch occupies residues 1 to 20 (MSETLYTGISQLATPRPGPQ). Fe(3+) is bound by residues histidine 74 and histidine 76. Zn(2+) is bound by residues histidine 74 and histidine 76. The 4-imidazolone-5-propanoate site is built by arginine 83, tyrosine 146, and histidine 176. Position 146 (tyrosine 146) interacts with N-formimidoyl-L-glutamate. Residue histidine 238 coordinates Fe(3+). Position 238 (histidine 238) interacts with Zn(2+). Residue glutamine 241 coordinates 4-imidazolone-5-propanoate. Aspartate 312 is a Fe(3+) binding site. Aspartate 312 contributes to the Zn(2+) binding site. Residues asparagine 314 and glycine 316 each coordinate N-formimidoyl-L-glutamate. A 4-imidazolone-5-propanoate-binding site is contributed by serine 317.

This sequence belongs to the metallo-dependent hydrolases superfamily. HutI family. Zn(2+) serves as cofactor. The cofactor is Fe(3+).

It is found in the cytoplasm. It catalyses the reaction 4-imidazolone-5-propanoate + H2O = N-formimidoyl-L-glutamate. The protein operates within amino-acid degradation; L-histidine degradation into L-glutamate; N-formimidoyl-L-glutamate from L-histidine: step 3/3. Functionally, catalyzes the hydrolytic cleavage of the carbon-nitrogen bond in imidazolone-5-propanoate to yield N-formimidoyl-L-glutamate. It is the third step in the universal histidine degradation pathway. This is Imidazolonepropionase from Deinococcus radiodurans (strain ATCC 13939 / DSM 20539 / JCM 16871 / CCUG 27074 / LMG 4051 / NBRC 15346 / NCIMB 9279 / VKM B-1422 / R1).